An 87-amino-acid polypeptide reads, in one-letter code: HssA/B-like protein 58 (87 aa).

Over residues M1–P13 the composition is skewed to polar residues. Residues M1–M31 form a disordered region. Positions N14–M31 are enriched in low complexity.

It belongs to the hssA/B family.

The polypeptide is HssA/B-like protein 58 (hssl58) (Dictyostelium discoideum (Social amoeba)).